A 550-amino-acid polypeptide reads, in one-letter code: Genetic interactor of prohibitins 3, mitochondrial (550 aa).

Residues methionine 1 to lysine 43 constitute a mitochondrion transit peptide. One can recognise a CP-type G domain in the interval isoleucine 107–aspartate 298.

It belongs to the TRAFAC class YlqF/YawG GTPase family. GEP3 subfamily.

The protein localises to the mitochondrion. Functionally, may be involved in the mitochondrial lipid metabolism. This Kluyveromyces lactis (strain ATCC 8585 / CBS 2359 / DSM 70799 / NBRC 1267 / NRRL Y-1140 / WM37) (Yeast) protein is Genetic interactor of prohibitins 3, mitochondrial (GEP3).